The chain runs to 426 residues: Glutamyl-tRNA reductase (426 aa).

Substrate is bound by residues 49-52, Ser-109, 114-116, and Gln-120; these read TCNR and EGQ. Residue Cys-50 is the Nucleophile of the active site. An NADP(+)-binding site is contributed by 189–194; sequence GAGETG.

Belongs to the glutamyl-tRNA reductase family. As to quaternary structure, homodimer.

The catalysed reaction is (S)-4-amino-5-oxopentanoate + tRNA(Glu) + NADP(+) = L-glutamyl-tRNA(Glu) + NADPH + H(+). The protein operates within porphyrin-containing compound metabolism; protoporphyrin-IX biosynthesis; 5-aminolevulinate from L-glutamyl-tRNA(Glu): step 1/2. It functions in the pathway porphyrin-containing compound metabolism; chlorophyll biosynthesis. Functionally, catalyzes the NADPH-dependent reduction of glutamyl-tRNA(Glu) to glutamate 1-semialdehyde (GSA). The sequence is that of Glutamyl-tRNA reductase from Prosthecochloris aestuarii (strain DSM 271 / SK 413).